The sequence spans 247 residues: Type III pantothenate kinase (247 aa).

An ATP-binding site is contributed by 6 to 13; sequence DVGNTHTT. Residue 101-104 coordinates substrate; that stretch reads GADR. Catalysis depends on Asp-103, which acts as the Proton acceptor. Asp-123 contributes to the K(+) binding site. Thr-126 contacts ATP. Position 177 (Thr-177) interacts with substrate.

This sequence belongs to the type III pantothenate kinase family. As to quaternary structure, homodimer. NH4(+) is required as a cofactor. It depends on K(+) as a cofactor.

It is found in the cytoplasm. It catalyses the reaction (R)-pantothenate + ATP = (R)-4'-phosphopantothenate + ADP + H(+). The protein operates within cofactor biosynthesis; coenzyme A biosynthesis; CoA from (R)-pantothenate: step 1/5. Functionally, catalyzes the phosphorylation of pantothenate (Pan), the first step in CoA biosynthesis. The chain is Type III pantothenate kinase from Thermosipho melanesiensis (strain DSM 12029 / CIP 104789 / BI429).